The chain runs to 353 residues: Replication-associated protein (353 aa).

Residues 8–116 form the CRESS-DNA virus Rep endonuclease domain; sequence RVQSKNYFLT…DGVTIEWGQF (109 aa). The RCR-1 motif lies at 15–18; that stretch reads FLTY. The a divalent metal cation site is built by E49, H57, and H59. An RCR-2 motif is present at residues 57–59; that stretch reads HLH. Residue Y103 is the For DNA cleavage activity of the active site. The RCR-3 motif lies at 103 to 106; that stretch reads YIDK. D107 provides a ligand contact to a divalent metal cation. A binding to RBR1 region spans residues 143–153; it reads IESALTILKEE. The oligomerization stretch occupies residues 156–176; sequence KDYVLQNHNIRSNLERIFFKV. 222-229 lines the ATP pocket; that stretch reads GDSRTGKT.

This sequence belongs to the geminiviridae Rep protein family. In terms of assembly, homooligomer. Interacts with the replication enhancer protein (REn). Interacts with host retinoblastoma-related protein 1 (RBR1), and may thereby induce the transcription of host replicative enzymes even if the cell is not dividing anymore. Interacts with host PCNA. Interacts with host SCE1 protein. Binds to host RAD54 protein to ensure geminiviral replication. Mg(2+) is required as a cofactor. Requires Mn(2+) as cofactor.

The protein localises to the host nucleus. Essential for the replication of viral ssDNA. The closed circular ssDNA genome is first converted to a superhelical dsDNA. Rep binds a specific region at the genome origin of replication. It introduces an endonucleolytic nick within the conserved sequence 5'-TAATATTAC-3' in the intergenic region of the genome present in all geminiviruses, thereby initiating the rolling circle replication (RCR). Following cleavage, binds covalently to the 5'-phosphate of DNA as a tyrosyl ester. The cleavage gives rise to a free 3'-OH that serves as a primer for the cellular DNA polymerase. The polymerase synthesizes the (+) strand DNA by rolling circle mechanism. After one round of replication, a Rep-catalyzed nucleotidyl transfer reaction releases a circular single-stranded virus genome, thereby terminating the replication. Displays origin-specific DNA cleavage, nucleotidyl transferase, ATPase and helicase activities. The protein is Replication-associated protein of Macroptilium lathyroides (Lima bean).